Consider the following 185-residue polypeptide: Putative sulfur carrier protein YrkF (185 aa).

Residue C15 is the Cysteine persulfide intermediate of the active site. The Rhodanese domain maps to 101-185 (SDESLNILDV…GMRDWTGKTE (85 aa)).

Belongs to the sulfur carrier protein TusA family.

The polypeptide is Putative sulfur carrier protein YrkF (yrkF) (Bacillus subtilis (strain 168)).